A 1160-amino-acid chain; its full sequence is Large proline-rich protein BAG6 (1160 aa).

Residues 7–82 (IEVTVKTLDS…HLVERPPPQS (76 aa)) form the Ubiquitin-like domain. Disordered stretches follow at residues 76–114 (ERPPPQSSQPGGGGGGVSGSSGAADGGSSSSQSSAYTTS), 206–261 (EGQS…HPSP), 367–422 (IPMN…GQGT), 478–547 (ASAG…QTNQ), 563–628 (GDQT…DNLA), 672–711 (SGQPVFPSPNQQPPPSQATPPSAPSGPAPTTAPSGGAETL), 962–1038 (SARR…AEPW), and 1126–1160 (YAQQVKSDIKKRLSDDPDYNHQRFPNTHRVFSEDA). A compositionally biased stretch (gly residues) spans 85–94 (PGGGGGGVSG). Low complexity-rich tracts occupy residues 95-110 (SSGAADGGSSSSQSSA) and 223-233 (SSSSFSAHPMD). Polar residues-rich tracts occupy residues 247 to 257 (QTEGETQSGPN) and 371 to 417 (LGST…QQTG). Composition is skewed to low complexity over residues 478–495 (ASAGHQGQQQGTAGAGAQ) and 566–614 (TSTT…STAS). Pro residues predominate over residues 677–698 (FPSPNQQPPPSQATPPSAPSGP). A compositionally biased stretch (low complexity) spans 699–708 (APTTAPSGGA). Positions 1132–1146 (SDIKKRLSDDPDYNH) are enriched in basic and acidic residues.

Component of the bag6/bat3 complex.

It localises to the cytoplasm. The protein localises to the cytosol. The protein resides in the nucleus. It is found in the secreted. Its subcellular location is the extracellular exosome. In terms of biological role, ATP-independent molecular chaperone preventing the aggregation of misfolded and hydrophobic patches-containing proteins. Functions as part of a cytosolic protein quality control complex, the bag6/bat3 complex, which maintains these client proteins in a soluble state and participates in their proper delivery to the endoplasmic reticulum or alternatively can promote their sorting to the proteasome where they undergo degradation. The bag6/bat3 complex is involved in the post-translational delivery of tail-anchored/type II transmembrane proteins to the endoplasmic reticulum membrane. Similarly, the bag6/bat3 complex also functions as a sorting platform for proteins of the secretory pathway that are mislocalized to the cytosol either delivering them to the proteasome for degradation or to the endoplasmic reticulum. The bag6/bat3 complex also plays a role in the endoplasmic reticulum-associated degradation (ERAD), a quality control mechanism that eliminates unwanted proteins of the endoplasmic reticulum through their retrotranslocation to the cytosol and their targeting to the proteasome. It maintains these retrotranslocated proteins in an unfolded yet soluble state condition in the cytosol to ensure their proper delivery to the proteasome. Also required for selective ubiquitin-mediated degradation of defective nascent chain polypeptides by the proteasome. Also involved in endoplasmic reticulum stress-induced pre-emptive quality control, a mechanism that selectively attenuates the translocation of newly synthesized proteins into the endoplasmic reticulum and reroutes them to the cytosol for proteasomal degradation. May ensure the proper degradation of these proteins and thereby protects the endoplasmic reticulum from protein overload upon stress. By stabilizing a large spectrum of proteins, may indirectly affect different biological processes including apoptosis. By controlling the steady-state expression of the IGF1R receptor, indirectly regulates the insulin-like growth factor receptor signaling pathway. Its function is as follows. When nuclear, may also act as a component of some chromatin regulator complex. The protein is Large proline-rich protein BAG6 of Danio rerio (Zebrafish).